We begin with the raw amino-acid sequence, 1345 residues long: Aldehyde oxidase 2 (1345 aa).

Residues 9–96 form the 2Fe-2S ferredoxin-type domain; the sequence is DDLEFFVNGR…GAAVTTVEGV (88 aa). 4 residues coordinate [2Fe-2S] cluster: cysteine 48, cysteine 53, cysteine 56, and cysteine 78. Glutamine 117 serves as a coordination point for Mo-molybdopterin. Positions 118, 121, 153, and 155 each coordinate [2Fe-2S] cluster. Residue cysteine 155 participates in Mo-molybdopterin binding. Positions 238 to 423 constitute an FAD-binding PCMH-type domain; the sequence is FYGERITWIA…GSVYIPHSQK (186 aa). FAD contacts are provided by residues 266-273, alanine 347, serine 356, histidine 360, aspartate 369, and leucine 413; that span reads LISGNTAL. Mo-molybdopterin-binding positions include 812–813, 1094–1097, glutamine 1209, and leucine 1274; these read GF and ASVG. The active-site Proton acceptor; for azaheterocycle hydroxylase activity is glutamate 1276.

This sequence belongs to the xanthine dehydrogenase family. Homodimer. [2Fe-2S] cluster is required as a cofactor. Requires FAD as cofactor. The cofactor is Mo-molybdopterin. Expressed in olfactory mucosa epithelium (at protein level). Detected in skin.

It localises to the cytoplasm. It carries out the reaction an aldehyde + O2 + H2O = a carboxylate + H2O2 + H(+). Functionally, oxidase with broad substrate specificity, oxidizing aromatic azaheterocycles, such as phthalazine, as well as aldehydes, such as benzaldehyde and retinal. Cannot use hypoxanthine as substrate. The polypeptide is Aldehyde oxidase 2 (Aox2) (Mus musculus (Mouse)).